We begin with the raw amino-acid sequence, 411 residues long: Putative competence-damage inducible protein (411 aa).

This sequence belongs to the CinA family.

The sequence is that of Putative competence-damage inducible protein from Alkaliphilus metalliredigens (strain QYMF).